A 2207-amino-acid polypeptide reads, in one-letter code: Mediator of RNA polymerase II transcription subunit 13-like (2207 aa).

A compositionally biased stretch (polar residues) spans 337–355; the sequence is VQSAASHLGSQDGGMSTMH. 4 disordered regions span residues 337–368, 384–403, 431–479, and 519–574; these read VQSA…PKLH, AQSK…AAHS, VGPS…KRPL, and KYDK…VPVN. A compositionally biased stretch (basic residues) spans 356-368; that stretch reads SPKRSRKTPPKLH. Residues 384-394 show a composition bias toward polar residues; it reads AQSKRSQMSTP. A compositionally biased stretch (low complexity) spans 442–453; the sequence is PGFSAGLPSSSS. Residues 463–475 show a composition bias toward basic and acidic residues; that stretch reads KTTERQEKGDKLQ. Positions 528–539 are enriched in polar residues; sequence SRNTSKQMNLNP. A compositionally biased stretch (pro residues) spans 546-555; it reads PISPLPPTLS. A phosphoserine mark is found at Ser-548 and Ser-555. The LXXLL motif 1 motif lies at 664–668; that stretch reads LQRLL. Residues 731-747 show a composition bias toward basic and acidic residues; it reads GTEKDSLKKNKSEDGFG. A disordered region spans residues 731–767; the sequence is GTEKDSLKKNKSEDGFGTKDVTTPGHSTPVPDGKNAM. A phosphoserine mark is found at Ser-812 and Ser-821. A disordered region spans residues 816 to 847; the sequence is ELGAVSPALRSSKMPTVGTEERPPGKDGRAAG. The segment covering 834 to 844 has biased composition (basic and acidic residues); the sequence is TEERPPGKDGR. Ser-918 carries the phosphoserine modification. A disordered region spans residues 1004 to 1091; the sequence is DPDYVNTPQM…STTRPLNSVE (88 aa). A compositionally biased stretch (polar residues) spans 1009-1019; that stretch reads NTPQMNTPVTL. A compositionally biased stretch (low complexity) spans 1020–1031; sequence NSAAPASNSGAG. The span at 1072–1087 shows a compositional bias: polar residues; the sequence is TDQGSPASTPSTTRPL. The LXXLL motif 2 motif lies at 1224–1228; sequence LLLLL. Positions 1379-1400 are leucine-zipper; sequence LPIPTLLVGYDKEFLTISPFSL. 2 disordered regions span residues 1523 to 1652 and 2042 to 2077; these read LMPP…SVTE and GNLH…QGER. A compositionally biased stretch (low complexity) spans 1541–1593; the sequence is PGNAGSLPSNSGSGAPPAGSAFNPTSSSSANPTTSSSSASSGPPGSSAASAPG. Composition is skewed to polar residues over residues 1612-1624 and 1635-1649; these read QNPS…TDRT and PGQS…GQDS. Ser-2080 bears the Phosphoserine mark.

The protein belongs to the Mediator complex subunit 13 family. As to quaternary structure, component of the Mediator complex, which is composed of MED1, MED4, MED6, MED7, MED8, MED9, MED10, MED11, MED12, MED13, MED13L, MED14, MED15, MED16, MED17, MED18, MED19, MED20, MED21, MED22, MED23, MED24, MED25, MED26, MED27, MED29, MED30, MED31, CCNC, CDK8 and CDC2L6/CDK11. The MED12, MED13, CCNC and CDK8 subunits form a distinct module termed the CDK8 module. Mediator containing the CDK8 module is less active than Mediator lacking this module in supporting transcriptional activation. Individual preparations of the Mediator complex lacking one or more distinct subunits have been variously termed ARC, CRSP, DRIP, PC2, SMCC and TRAP. As to expression, highly expressed in heart and weakly expressed in brain, spleen, lung, liver, kidney and testis.

The protein localises to the nucleus. Component of the Mediator complex, a coactivator involved in the regulated transcription of nearly all RNA polymerase II-dependent genes. Mediator functions as a bridge to convey information from gene-specific regulatory proteins to the basal RNA polymerase II transcription machinery. Mediator is recruited to promoters by direct interactions with regulatory proteins and serves as a scaffold for the assembly of a functional preinitiation complex with RNA polymerase II and the general transcription factors. This subunit may specifically regulate transcription of targets of the Wnt signaling pathway and SHH signaling pathway. The sequence is that of Mediator of RNA polymerase II transcription subunit 13-like (Med13l) from Mus musculus (Mouse).